A 387-amino-acid polypeptide reads, in one-letter code: MTSHPVFIDLSLDEQVQELRKYFKKLGAEISSEKSNKGVEDDLHKIIGVCDVCFKDGEPSQIDGILNSIVSIMITIPLDRGENIVLAYCEKMTKAPNQPLGKVCLQSLWRLFNNLDTASPLRYHVYYHLVQVAKQCEQVLEVFTGVDQLKTQFANCPPSSEQMQKLYRLLHDVTKDTNMELSSKVMIELLGTYTADNACVAREDAMKCIVTALADPNTFLLDPLLALKPVRFLEGDLIHDLLSIFVSDKLPSYVQFYEDHKEFVNSQGLNHEQNMKKMRLLTFMQLAESNPEMTFDTLTKELQITEDEVEPFVIQVLKTKLVRARLDQANRKVHISSTMHRTFGAPQWEQLRDLLQAWKENLSSVRDGLTNVSSAQLELARTQKLIH.

The PCI domain maps to 181 to 340 (LSSKVMIELL…RKVHISSTMH (160 aa)).

The protein belongs to the eIF-3 subunit M family. Component of the eukaryotic translation initiation factor 3 (eIF-3) complex. The eIF-3 complex interacts with pix.

The protein localises to the cytoplasm. It is found in the golgi apparatus. In terms of biological role, component of the eukaryotic translation initiation factor 3 (eIF-3) complex, which is involved in protein synthesis of a specialized repertoire of mRNAs and, together with other initiation factors, stimulates binding of mRNA and methionyl-tRNAi to the 40S ribosome. The eIF-3 complex specifically targets and initiates translation of a subset of mRNAs involved in cell proliferation. In Drosophila pseudoobscura pseudoobscura (Fruit fly), this protein is Eukaryotic translation initiation factor 3 subunit M.